The primary structure comprises 449 residues: UNC93-like protein MFSD11 (449 aa).

Residues 8-28 (LFNIVILGVAFMFMFTAFQTC) form a helical membrane-spanning segment. An N-linked (GlcNAc...) asparagine glycan is attached at Asn40. 5 helical membrane-spanning segments follow: residues 53–73 (AIIYGVFSASNLITPSVVAIV), 74–94 (GPQISMFVSGLFYSMYIAVFI), 96–116 (PFPWSFYTASVFIGIAAAVLW), 138–158 (IFWALLQSSLFFGNLYIYFAW), and 170–190 (RTVFIALTVISLVGTVLFFLI). Ser204 is subject to Phosphoserine. 6 helical membrane passes run 239–259 (MLLLSVTTAYTGLELTFFSGV), 277–297 (LIGLSGIFIGIGEILGGSLFG), 309–329 (PVVLLGTLVHFVAFYLIFLNM), 359–379 (FLLGLGDSCFNTQLLSILGFL), 385–405 (APAFAVFKFVQSICAAVAFFY), and 410–430 (LLHWQLLVMVIFGFFGTISFF).

The protein belongs to the unc-93 family. In terms of tissue distribution, widely expressed.

The protein resides in the membrane. In Mus musculus (Mouse), this protein is UNC93-like protein MFSD11 (Mfsd11).